The chain runs to 506 residues: Putative amidase (506 aa).

Residues K121 and S196 each act as charge relay system in the active site. S220 functions as the Acyl-ester intermediate in the catalytic mechanism.

Belongs to the amidase family.

The enzyme catalyses a monocarboxylic acid amide + H2O = a monocarboxylate + NH4(+). The chain is Putative amidase from Synechocystis sp. (strain ATCC 27184 / PCC 6803 / Kazusa).